We begin with the raw amino-acid sequence, 1183 residues long: Ribosome biogenesis protein BMS1 (1183 aa).

Residues Met-1–Thr-23 are compositionally biased toward basic residues. Residues Met-1–Met-39 form a disordered region. Residues Pro-68–Arg-233 form the Bms1-type G domain. The interval Gly-76–Thr-83 is G1. Gly-76–Thr-83 serves as a coordination point for ATP. The G2 stretch occupies residues Pro-104–Val-108. Residues Glu-119–Ala-122 form a G3 region. Positions Thr-172–Asp-175 are G4. The tract at residues Leu-207–Pro-216 is G5. Positions Glu-427–Pro-494 are disordered. The segment covering Asp-435–Glu-447 has biased composition (acidic residues). At Ser-438 the chain carries Phosphoserine. Residues Lys-451–Ile-461 are compositionally biased toward basic residues. Acidic residues predominate over residues Glu-468 to Asp-491. Phosphoserine is present on residues Ser-478 and Ser-492. Phosphothreonine is present on residues Thr-504 and Thr-516. Phosphoserine is present on residues Ser-518 and Ser-523. The segment at Lys-536–Ser-559 is RCL1-binding. Residues Ser-574 and Ser-578 each carry the phosphoserine modification. Disordered regions lie at residues Gly-639–Asp-709 and Lys-1123–Arg-1183. Residues Glu-653 to Asn-697 show a composition bias toward acidic residues. Composition is skewed to basic and acidic residues over residues Lys-1123–Lys-1136, Ala-1143–Tyr-1160, and Asp-1174–Arg-1183.

The protein belongs to the TRAFAC class translation factor GTPase superfamily. Bms1-like GTPase family. BMS1 subfamily. In terms of assembly, interacts directly with RCL1 and the U3 snoRNA to form a stable subcomplex. Component of the 90S small subunit processome also known as 90S pre-ribosome that consists of the 35S pre-rRNA, early-associating ribosomal proteins most of which are part of the small ribosomal subunit, the U3 snoRNA and associated proteins.

It localises to the cytoplasm. The protein resides in the nucleus. The protein localises to the nucleolus. It catalyses the reaction GTP + H2O = GDP + phosphate + H(+). Interactions with RCL1 stimulates its GTPase and U3 snoRNA binding activities. RCL1 activates BMS1 by promoting GDP/GTP exchange. In terms of biological role, GTPase required for synthesis of 40S ribosomal subunits and for processing the 35S pre-rRNA at sites A0, A1, and A2. Controls access of pre-ribosomal RNA intermediates to RCL1 during ribosome biogenesis by binding of RCL1 in a GTP-dependent manner and, via its affinity to U3 snoRNA, delivering it to pre-ribosomes. GTP-binding and/or GTP hydrolysis may induce conformational rearrangements within the BMS1-RCL1 complex allowing the interaction of RCL1 with its RNA substrate. Required for RCL1 import into the nucleus. This chain is Ribosome biogenesis protein BMS1 (BMS1), found in Saccharomyces cerevisiae (strain ATCC 204508 / S288c) (Baker's yeast).